A 341-amino-acid chain; its full sequence is Anthranilate phosphoribosyltransferase (341 aa).

Residues Gly-84, Gly-87–Asp-88, Thr-92, Asn-94–Thr-97, Lys-112–Ser-120, and Ser-124 each bind 5-phospho-alpha-D-ribose 1-diphosphate. Residue Gly-84 participates in anthranilate binding. Residue Thr-96 coordinates Mg(2+). Asn-115 serves as a coordination point for anthranilate. Residue Arg-170 participates in anthranilate binding. Mg(2+) contacts are provided by Asp-228 and Glu-229.

It belongs to the anthranilate phosphoribosyltransferase family. As to quaternary structure, homodimer. The cofactor is Mg(2+).

It carries out the reaction N-(5-phospho-beta-D-ribosyl)anthranilate + diphosphate = 5-phospho-alpha-D-ribose 1-diphosphate + anthranilate. Its pathway is amino-acid biosynthesis; L-tryptophan biosynthesis; L-tryptophan from chorismate: step 2/5. In terms of biological role, catalyzes the transfer of the phosphoribosyl group of 5-phosphorylribose-1-pyrophosphate (PRPP) to anthranilate to yield N-(5'-phosphoribosyl)-anthranilate (PRA). In Corynebacterium diphtheriae (strain ATCC 700971 / NCTC 13129 / Biotype gravis), this protein is Anthranilate phosphoribosyltransferase.